The sequence spans 110 residues: Protein YcgL (110 aa).

In terms of domain architecture, YcgL spans methionine 14 to leucine 98. The interval proline 88 to arginine 110 is disordered. Residues histidine 97 to arginine 110 show a composition bias toward polar residues.

The protein is Protein YcgL of Salmonella paratyphi A (strain ATCC 9150 / SARB42).